A 153-amino-acid polypeptide reads, in one-letter code: UPF0158 protein PA5073 (153 aa).

This sequence belongs to the UPF0158 family.

The polypeptide is UPF0158 protein PA5073 (Pseudomonas aeruginosa (strain ATCC 15692 / DSM 22644 / CIP 104116 / JCM 14847 / LMG 12228 / 1C / PRS 101 / PAO1)).